The sequence spans 400 residues: Elongation factor Tu (400 aa).

The 199-residue stretch at 10–208 (KPHMNVGTIG…AMDSYFPDPV (199 aa)) folds into the tr-type G domain. Positions 19-26 (GHIDHGKT) are G1. 19-26 (GHIDHGKT) is a GTP binding site. Residue Thr26 participates in Mg(2+) binding. The interval 60 to 64 (GITIN) is G2. A G3 region spans residues 81 to 84 (DCPG). GTP contacts are provided by residues 81–85 (DCPGH) and 136–139 (NKVD). Positions 136–139 (NKVD) are G4. Residues 174-176 (SAL) form a G5 region.

Belongs to the TRAFAC class translation factor GTPase superfamily. Classic translation factor GTPase family. EF-Tu/EF-1A subfamily. As to quaternary structure, monomer.

The protein resides in the cytoplasm. It carries out the reaction GTP + H2O = GDP + phosphate + H(+). Functionally, GTP hydrolase that promotes the GTP-dependent binding of aminoacyl-tRNA to the A-site of ribosomes during protein biosynthesis. In Fervidobacterium nodosum (strain ATCC 35602 / DSM 5306 / Rt17-B1), this protein is Elongation factor Tu.